The primary structure comprises 311 residues: Formimidoylglutamase (311 aa).

Positions 122, 151, 153, 155, 242, and 244 each coordinate Mn(2+).

This sequence belongs to the arginase family. It depends on Mn(2+) as a cofactor.

It carries out the reaction N-formimidoyl-L-glutamate + H2O = formamide + L-glutamate. It functions in the pathway amino-acid degradation; L-histidine degradation into L-glutamate; L-glutamate from N-formimidoyl-L-glutamate (hydrolase route): step 1/1. Its function is as follows. Catalyzes the conversion of N-formimidoyl-L-glutamate to L-glutamate and formamide. This Pseudomonas aeruginosa (strain UCBPP-PA14) protein is Formimidoylglutamase.